We begin with the raw amino-acid sequence, 451 residues long: UPF0210 protein Cbei_2352 (451 aa).

The protein belongs to the UPF0210 family. Homodimer.

This chain is UPF0210 protein Cbei_2352, found in Clostridium beijerinckii (strain ATCC 51743 / NCIMB 8052) (Clostridium acetobutylicum).